A 339-amino-acid chain; its full sequence is DNA-directed RNA polymerase subunit alpha (339 aa).

An alpha N-terminal domain (alpha-NTD) region spans residues 1-235 (MTIQKNWQEL…DQLNVFVNFE (235 aa)). Positions 251–339 (FNPAFLKKVD…ELAKRFEDHY (89 aa)) are alpha C-terminal domain (alpha-CTD).

Belongs to the RNA polymerase alpha chain family. In terms of assembly, homodimer. The RNAP catalytic core consists of 2 alpha, 1 beta, 1 beta' and 1 omega subunit. When a sigma factor is associated with the core the holoenzyme is formed, which can initiate transcription.

It carries out the reaction RNA(n) + a ribonucleoside 5'-triphosphate = RNA(n+1) + diphosphate. In terms of biological role, DNA-dependent RNA polymerase catalyzes the transcription of DNA into RNA using the four ribonucleoside triphosphates as substrates. This Rhodopseudomonas palustris (strain BisB5) protein is DNA-directed RNA polymerase subunit alpha.